The following is a 587-amino-acid chain: Aspartate--tRNA ligase (587 aa).

Residue Glu173 participates in L-aspartate binding. The interval 197–200 (QTLK) is aspartate. Residue Arg219 participates in L-aspartate binding. ATP contacts are provided by residues 219-221 (RDE) and Gln228. Residue His446 participates in L-aspartate binding. Glu480 lines the ATP pocket. L-aspartate is bound at residue Arg487. Residue 532 to 535 (GLDR) participates in ATP binding.

This sequence belongs to the class-II aminoacyl-tRNA synthetase family. Type 1 subfamily. As to quaternary structure, homodimer.

The protein resides in the cytoplasm. The enzyme catalyses tRNA(Asp) + L-aspartate + ATP = L-aspartyl-tRNA(Asp) + AMP + diphosphate. In terms of biological role, catalyzes the attachment of L-aspartate to tRNA(Asp) in a two-step reaction: L-aspartate is first activated by ATP to form Asp-AMP and then transferred to the acceptor end of tRNA(Asp). The polypeptide is Aspartate--tRNA ligase (Bacteroides thetaiotaomicron (strain ATCC 29148 / DSM 2079 / JCM 5827 / CCUG 10774 / NCTC 10582 / VPI-5482 / E50)).